The chain runs to 315 residues: MVVVTEEIVNGLKETLTDVSQPIAKRFRSLFTLRNLNGPLCIDAMASALNDKSALLRHEIAYCLGQMEDEYALKVLIDLVKNSDEHPMVRHEAAEALGAIGSESAHKTLKEYSNDPVREVSETCQLALSRVEWYEKNKPETEEDKMYMSVDPAPPLKKGSVSRDELRSKFLDSNLDIFNRYRALFSLRDIGDEQSVLALCDGLKDQSSALLRHEVAFVLGQLQHRVAIDPLTTCVLDESENAMVRHEAAEALGAIASTETIPLLEKLLQDKEPIVSESCAVALDVTEYFNNTESFQYADGIKILLEKNLVDQQQK.

HEAT-like PBS-type repeat units follow at residues Ile-23–Lys-52, Leu-56–Asn-82, Val-89–Asp-115, Asn-179–Asp-205, Leu-211–Asp-237, and Val-244–Asp-270. Positions 58, 91, and 92 each coordinate Fe cation. Fe cation-binding residues include His-213, His-246, and Glu-247.

The protein belongs to the deoxyhypusine hydroxylase family. Fe(2+) serves as cofactor.

The catalysed reaction is [eIF5A protein]-deoxyhypusine + AH2 + O2 = [eIF5A protein]-hypusine + A + H2O. It functions in the pathway protein modification; eIF5A hypusination. Functionally, catalyzes the hydroxylation of the N(6)-(4-aminobutyl)-L-lysine intermediate produced by deoxyhypusine synthase/DHPS on a critical lysine of the eukaryotic translation initiation factor 5A/eIF-5A. This is the second step of the post-translational modification of that lysine into an unusual amino acid residue named hypusine. Hypusination is unique to mature eIF-5A factor and is essential for its function. This is Deoxyhypusine hydroxylase (dohh-1) from Dictyostelium discoideum (Social amoeba).